A 44-amino-acid polypeptide reads, in one-letter code: Protein PsbN (44 aa).

A helical membrane pass occupies residues 6 to 26 (FFFTIFLWCLLLSVTGYSVYV).

Belongs to the PsbN family.

It is found in the plastid. The protein resides in the chloroplast thylakoid membrane. Its function is as follows. May play a role in photosystem I and II biogenesis. This Oltmannsiellopsis viridis (Marine flagellate) protein is Protein PsbN.